We begin with the raw amino-acid sequence, 199 residues long: NAD(P)H dehydrogenase (quinone) (199 aa).

Residues 4–190 (VLVLYYSAYG…EAAKYQGAHV (187 aa)) form the Flavodoxin-like domain. Residues 10–15 (SAYGHI) and 78–80 (TRF) contribute to the FMN site. Y12 contacts NAD(+). W98 contacts substrate. FMN is bound by residues 113–119 (SSATQHG) and H134.

This sequence belongs to the WrbA family. FMN is required as a cofactor.

The catalysed reaction is a quinone + NADH + H(+) = a quinol + NAD(+). It catalyses the reaction a quinone + NADPH + H(+) = a quinol + NADP(+). In Rhizobium rhizogenes (strain K84 / ATCC BAA-868) (Agrobacterium radiobacter), this protein is NAD(P)H dehydrogenase (quinone).